A 120-amino-acid chain; its full sequence is Ubiquitin domain-containing protein TINCR (120 aa).

One can recognise a Ubiquitin-like domain in the interval 14–83 (YHIKVHLADE…LQDGSVLLLV (70 aa)).

In terms of tissue distribution, detected in stratum corneum (at protein level).

This is Ubiquitin domain-containing protein TINCR from Homo sapiens (Human).